The chain runs to 334 residues: Fructose-1,6-bisphosphatase class 1 (334 aa).

Residues Glu93, Asp117, Leu119, and Asp120 each coordinate Mg(2+). Residues 120 to 123 (DGSS), Asn213, Tyr244, and Lys274 contribute to the substrate site. Glu280 is a Mg(2+) binding site.

Belongs to the FBPase class 1 family. As to quaternary structure, homotetramer. Mg(2+) is required as a cofactor.

The protein localises to the cytoplasm. It catalyses the reaction beta-D-fructose 1,6-bisphosphate + H2O = beta-D-fructose 6-phosphate + phosphate. It participates in carbohydrate biosynthesis; gluconeogenesis. This Flavobacterium johnsoniae (strain ATCC 17061 / DSM 2064 / JCM 8514 / BCRC 14874 / CCUG 350202 / NBRC 14942 / NCIMB 11054 / UW101) (Cytophaga johnsonae) protein is Fructose-1,6-bisphosphatase class 1.